The following is a 458-amino-acid chain: (R)-6-hydroxynicotine oxidase (458 aa).

Residues arginine 33–leucine 204 form the FAD-binding PCMH-type domain. Residues arginine 67–proline 73, histidine 129–proline 130, phenylalanine 134–leucine 137, glycine 144, threonine 195, asparagine 413, and asparagine 450 contribute to the FAD site. Histidine 71 is subject to Pros-8alpha-FAD histidine.

Belongs to the oxygen-dependent FAD-linked oxidoreductase family. As to quaternary structure, monomer. Requires FAD as cofactor.

The protein resides in the cytoplasm. The catalysed reaction is (R)-6-hydroxynicotine + O2 + H2O = 6-hydroxypseudooxynicotine + H2O2. The enzyme catalyses (R)-6-hydroxynicotine + O2 = 6-hydroxy-N-methylmyosmine + H2O2. The protein operates within alkaloid degradation; nicotine degradation; 6-hydroxypseudooxynicotine from nicotine (R-isomer route): step 2/2. Inhibited by (S)-6-hydroxynicotine. Inhibited by high concentrations of phenanthroline. Involved in the degradation of D-nicotine. Catalyzes the oxidation of (R)-6-hydroxynicotine (6-hydroxy-D-nicotine) to 6-hydroxypseudooxynicotine. Oxidation of the pyrrolidine ring of (R)-6-hydroxynicotine leads to the formation of the optically inactive 6-hydroxy-N-methylmyosmine, which hydrolyzes spontaneously to 6-hydroxypseudooxynicotine. Acts with absolute stereospecificity on the D-form of 6-hydroxynicotine. Shows lower activity with (R)-6-hydroxynornicotine, and weak activity with (R)-4-(1-methylpyrrolidine-2-yl)phenol, (R)-6-chloronicotine and (R)-nicotine. This Paenarthrobacter nicotinovorans (Arthrobacter nicotinovorans) protein is (R)-6-hydroxynicotine oxidase.